Here is a 44-residue protein sequence, read N- to C-terminus: Photosystem I reaction center subunit IX (44 aa).

A helical transmembrane segment spans residues Phe9–Ile29.

The protein belongs to the PsaJ family.

It is found in the cellular thylakoid membrane. In terms of biological role, may help in the organization of the PsaE and PsaF subunits. This Prochlorococcus marinus subsp. pastoris (strain CCMP1986 / NIES-2087 / MED4) protein is Photosystem I reaction center subunit IX.